The following is a 158-amino-acid chain: Cytochrome c-type biogenesis protein CcmE (158 aa).

Residues 1–23 (MNSQSFKNFPSLKFISKKRRKER) are Cytoplasmic-facing. Residues 24 to 44 (LLMVLLCLFIMAITTGLIVYA) traverse the membrane as a helical; Signal-anchor for type II membrane protein segment. At 45 to 158 (MRNTANFFRT…DRLKKHHDIK (114 aa)) the chain is on the periplasmic side. Residues histidine 138 and tyrosine 142 each coordinate heme.

Belongs to the CcmE/CycJ family.

The protein resides in the cell inner membrane. Heme chaperone required for the biogenesis of c-type cytochromes. Transiently binds heme delivered by CcmC and transfers the heme to apo-cytochromes in a process facilitated by CcmF and CcmH. The sequence is that of Cytochrome c-type biogenesis protein CcmE from Bartonella bacilliformis (strain ATCC 35685 / KC583 / Herrer 020/F12,63).